We begin with the raw amino-acid sequence, 464 residues long: Bifunctional protein GlmU (464 aa).

The segment at 1–232 is pyrophosphorylase; it reads MKHDELAAVI…ADEAMGINDR (232 aa). Residues 11-14, lysine 25, glutamine 76, and 81-82 each bind UDP-N-acetyl-alpha-D-glucosamine; these read LAAG and GT. Residue aspartate 106 coordinates Mg(2+). UDP-N-acetyl-alpha-D-glucosamine is bound by residues glycine 143, glutamate 157, asparagine 172, and asparagine 230. Asparagine 230 provides a ligand contact to Mg(2+). The tract at residues 233-253 is linker; the sequence is VQLAQASALMRRRINENLMRA. The interval 254 to 464 is N-acetyltransferase; sequence GVSFIDPEQT…RHDPKCKNKD (211 aa). Residues arginine 336 and lysine 354 each coordinate UDP-N-acetyl-alpha-D-glucosamine. Residue histidine 366 is the Proton acceptor of the active site. The UDP-N-acetyl-alpha-D-glucosamine site is built by tyrosine 369 and asparagine 380. Residues 389 to 390, serine 408, alanine 426, and arginine 443 contribute to the acetyl-CoA site; that span reads NY.

In the N-terminal section; belongs to the N-acetylglucosamine-1-phosphate uridyltransferase family. This sequence in the C-terminal section; belongs to the transferase hexapeptide repeat family. Homotrimer. It depends on Mg(2+) as a cofactor.

It localises to the cytoplasm. The enzyme catalyses alpha-D-glucosamine 1-phosphate + acetyl-CoA = N-acetyl-alpha-D-glucosamine 1-phosphate + CoA + H(+). It catalyses the reaction N-acetyl-alpha-D-glucosamine 1-phosphate + UTP + H(+) = UDP-N-acetyl-alpha-D-glucosamine + diphosphate. It functions in the pathway nucleotide-sugar biosynthesis; UDP-N-acetyl-alpha-D-glucosamine biosynthesis; N-acetyl-alpha-D-glucosamine 1-phosphate from alpha-D-glucosamine 6-phosphate (route II): step 2/2. Its pathway is nucleotide-sugar biosynthesis; UDP-N-acetyl-alpha-D-glucosamine biosynthesis; UDP-N-acetyl-alpha-D-glucosamine from N-acetyl-alpha-D-glucosamine 1-phosphate: step 1/1. It participates in bacterial outer membrane biogenesis; LPS lipid A biosynthesis. In terms of biological role, catalyzes the last two sequential reactions in the de novo biosynthetic pathway for UDP-N-acetylglucosamine (UDP-GlcNAc). The C-terminal domain catalyzes the transfer of acetyl group from acetyl coenzyme A to glucosamine-1-phosphate (GlcN-1-P) to produce N-acetylglucosamine-1-phosphate (GlcNAc-1-P), which is converted into UDP-GlcNAc by the transfer of uridine 5-monophosphate (from uridine 5-triphosphate), a reaction catalyzed by the N-terminal domain. The polypeptide is Bifunctional protein GlmU (Syntrophotalea carbinolica (strain DSM 2380 / NBRC 103641 / GraBd1) (Pelobacter carbinolicus)).